A 670-amino-acid polypeptide reads, in one-letter code: UvrABC system protein B (670 aa).

The 387-residue stretch at 28–414 (NNFKQGLQEQ…KKIPIVEQII (387 aa)) folds into the Helicase ATP-binding domain. 41–48 (GATGTGKT) is a binding site for ATP. The Beta-hairpin motif lies at 94–117 (YYDYYQPEAYVASSDTYIEKDSKI). In terms of domain architecture, Helicase C-terminal spans 432–594 (QMDDLYFEIK…VTPTALNKTI (163 aa)). The UVR domain maps to 631-666 (NKEIKRLQKMMKEAAKTLDFEKAATLRDLILELEKK).

The protein belongs to the UvrB family. Forms a heterotetramer with UvrA during the search for lesions. Interacts with UvrC in an incision complex.

The protein resides in the cytoplasm. In terms of biological role, the UvrABC repair system catalyzes the recognition and processing of DNA lesions. A damage recognition complex composed of 2 UvrA and 2 UvrB subunits scans DNA for abnormalities. Upon binding of the UvrA(2)B(2) complex to a putative damaged site, the DNA wraps around one UvrB monomer. DNA wrap is dependent on ATP binding by UvrB and probably causes local melting of the DNA helix, facilitating insertion of UvrB beta-hairpin between the DNA strands. Then UvrB probes one DNA strand for the presence of a lesion. If a lesion is found the UvrA subunits dissociate and the UvrB-DNA preincision complex is formed. This complex is subsequently bound by UvrC and the second UvrB is released. If no lesion is found, the DNA wraps around the other UvrB subunit that will check the other stand for damage. The chain is UvrABC system protein B from Onion yellows phytoplasma (strain OY-M).